A 914-amino-acid polypeptide reads, in one-letter code: MRKTETMVQLSPSRTLETLTPSELTVEKDDGQGSPKPESPRMLSALQLALSSTTVYCGYEKYIEDGLICLKHKIRNIEKKKLKLERYSDKLKKGEKLNEDQLEAVGKYDEVVHNLKFAKELQKTIGSLTQDLLKAQRKAVRQEKQMKTDEEKSRLSLMLQVQYVLHSLQREDVRKNFCNTRQYSCYMSTQDMEGLMDLASLVGCKRDYSISLEDQMRRAAIVYWELLEGNEKPVAGSTYKHMKEKLLRLVDSGFFDNIPLPKSDSQEKTETIKPDSQSRPSGLTTLVKLSSNEVPSKEFLNRRYMPETDERRRGETASPRNWKEDFLAMKEREPPDSWEMEELADPPASSQSPIQKPWKGAAGLIPKTVDIVKRSTTDPKEKRQRKKAEQDSKSMPVAVEVFSSPSPLPKDPVQRRQQLETLMDQISGSFSFMQESLLDGESSPVNTQTKRCRPSPGSSTPIVQRELTKSPSDILPSSQRSTPLRILLSGEGKGCLSNGDRSINGSDLELHSEDKPRKQAEGFNSPPLYRRGSSISVSLENQSTVQAGRQMLCNGVSSSGSAQTFSTPPSRRSISAENPFHNIHSVFNVIGESSGMKADESGFSESIHRSFTSAKTSSVTTASTQTPPELNPPEEDLQIEGQYPLECAVSAGGPVFSSSHSRVGQSCYSRGAVRGGYDAYRVNVRSPGGSFMSQTHREPASALYMARENGYQQNFKRGAGTATQRSSAGWSDSSQVSSPDRDGAYPLDSGLSDTLSIPAMEVPMNPQGPHTLMPVHVYPLTQLRVAFSAARTANFAPGTLDQPIAFDLLHTNLGDMFDTGSGRFTCPATGAYVFIFHILKLAISVPLYINLMRNEEVMVSAYANDGAPDHETASNHAVLQLFQGDQVWLRLHRGAIYGSSWKYSTFSGFLLYQD.

Disordered regions lie at residues 259–283, 298–326, 367–411, 439–480, 495–529, 608–631, and 718–747; these read PLPKSDSQEKTETIKPDSQSRPSGL, EFLNRRYMPETDERRRGETASPRNWKEDF, KTVD…LPKD, DGES…SSQR, CLSNGDRSINGSDLELHSEDKPRKQAEGFNSPPLY, HRSFTSAKTSSVTTASTQTPPELN, and GAGTATQRSSAGWSDSSQVSSPDRDGAYPL. A compositionally biased stretch (basic and acidic residues) spans 264–273; the sequence is DSQEKTETIK. Residues 274 to 283 show a composition bias toward polar residues; it reads PDSQSRPSGL. The span at 370-392 shows a compositional bias: basic and acidic residues; that stretch reads DIVKRSTTDPKEKRQRKKAEQDS. Over residues 469–480 the composition is skewed to polar residues; that stretch reads KSPSDILPSSQR. Residues 508–520 are compositionally biased toward basic and acidic residues; it reads LELHSEDKPRKQA. Residues 610–626 are compositionally biased toward low complexity; sequence SFTSAKTSSVTTASTQT. Residues 718-738 show a composition bias toward polar residues; that stretch reads GAGTATQRSSAGWSDSSQVSS. Positions 780-914 constitute a C1q domain; it reads LTQLRVAFSA…TFSGFLLYQD (135 aa). Aspartate 865 and glutamate 871 together coordinate Ca(2+).

Belongs to the caprin family. In terms of assembly, homotrimer; via C1q domain.

It is found in the cytoplasm. The protein resides in the cell membrane. Functionally, promotes phosphorylation of the Wnt coreceptor LRP6, leading to increased activity of the canonical Wnt signaling pathway. Facilitates constitutive LRP6 phosphorylation by CDK14/CCNY during G2/M stage of the cell cycle, which may potentiate cells for Wnt signaling. May regulate the transport and translation of mRNAs, modulating for instance the expression of proteins involved in synaptic plasticity in neurons. Involved in regulation of growth as erythroblasts shift from a highly proliferative state towards their terminal phase of differentiation. May be involved in apoptosis. This chain is Caprin-2, found in Danio rerio (Zebrafish).